We begin with the raw amino-acid sequence, 718 residues long: Probable protein S-acyltransferase 19 (718 aa).

A run of 2 helical transmembrane segments spans residues 16–36 and 41–61; these read VVAITVFCLLSVAYYAFFAPF and IWEYILLGVYSPVALIVFVLY. Residues 100–125 are disordered; that stretch reads ETGSHLQSSPSVASRTSTLPNSSVKG. The segment covering 103 to 124 has biased composition (polar residues); that stretch reads SHLQSSPSVASRTSTLPNSSVK. Residues 174–224 form the DHHC domain; the sequence is LFCTLCNAEVRKFSKHCRSCDKCVDCFDHHCRWLNNCVGRKNYMTFISLMA. Cys-204 serves as the catalytic S-palmitoyl cysteine intermediate. 2 consecutive transmembrane segments (helical) span residues 222–242 and 277–297; these read LMAVSLLWLLIEAGVGIAVIV and AVSMLALFPLGELFFFHMLLI. 3 disordered regions span residues 454 to 511, 598 to 649, and 664 to 718; these read SSVS…HVHE, PATT…QQQQ, and GPLV…GTRK. 2 stretches are compositionally biased toward polar residues: residues 479-488 and 598-626; these read CRNSYAPSQG and PATTSEPRTRFSSQNQPIPSSHMGNTQNP. The segment covering 673–687 has biased composition (basic and acidic residues); that stretch reads DGLRHDGDSGREGQD.

It belongs to the DHHC palmitoyltransferase family.

The protein localises to the cell membrane. It catalyses the reaction L-cysteinyl-[protein] + hexadecanoyl-CoA = S-hexadecanoyl-L-cysteinyl-[protein] + CoA. Palmitoyl acyltransferase. This Arabidopsis thaliana (Mouse-ear cress) protein is Probable protein S-acyltransferase 19 (PAT19).